An 86-amino-acid chain; its full sequence is MKVSVLITLAVLGVMFVWASAAELEERGSDHRDSPAWLKSMERIFQSEERECRKMFGGCSVHSDCCAHLGCKPTLKYCAWDGTFGK.

Residues 1–21 (MKVSVLITLAVLGVMFVWASA) form the signal peptide. A propeptide spanning residues 22-50 (AELEERGSDHRDSPAWLKSMERIFQSEER) is cleaved from the precursor. Disulfide bonds link C52-C66, C59-C71, and C65-C78.

It belongs to the neurotoxin 10 (Hwtx-1) family. 28 (Jztx-11) subfamily. As to expression, expressed by the venom gland.

The protein localises to the secreted. Probable ion channel inhibitor. This is Kappa-theraphotoxin-Cg1c from Chilobrachys guangxiensis (Chinese earth tiger tarantula).